Here is a 212-residue protein sequence, read N- to C-terminus: Thymidylate kinase (212 aa).

10-17 serves as a coordination point for ATP; it reads GPDGAGKS.

Belongs to the thymidylate kinase family.

The enzyme catalyses dTMP + ATP = dTDP + ADP. Its function is as follows. Phosphorylation of dTMP to form dTDP in both de novo and salvage pathways of dTTP synthesis. The sequence is that of Thymidylate kinase from Lactobacillus helveticus (strain DPC 4571).